Consider the following 136-residue polypeptide: Large ribosomal subunit protein uL16c (136 aa).

It belongs to the universal ribosomal protein uL16 family. In terms of assembly, part of the 50S ribosomal subunit.

The protein localises to the plastid. It is found in the chloroplast. The polypeptide is Large ribosomal subunit protein uL16c (Chlamydomonas reinhardtii (Chlamydomonas smithii)).